The chain runs to 458 residues: MAVLNPMTLGIYLQLFFCSIVSQPTFINSVLPISAALPGLDQKKRGNHKACCLLMPPPPPLFPPPFFRGSRSPLLSPDMKNLLELEASPSPCMQGSLGSPGPPGPQGPPGLPGKAGPKGEKGDLGRPGRKGRPGPPGVPGEPGPVGWPGPEGPRGEKGDVGMMGLPGSRGPMGSKGFPGSRGEKGSRGERGDLGPKGEKGFPGFPGMLGQKGEMGPKGESGIAGHRGPTGRPGKRGKQGQKGDSGIMGPPGKPGPSGQPGRQGPPGPPGPPSAGQLVMGLKGERGFPGPPGRCLCGPPANVNNPSYGDPMYGRGSPRVPAIFVVNNQEELEKLNTQNAIAFRRDQRSLYFKDSLGWLPIQLTPFYPVGLHHKAAWHLCGDGVLQPGEECDDGNPDVSDGCIDCHRAYCGDGYRHRGVEDCDGSDFGYLKCETYLPGSYGELRCTQYCSIDSTPCRYFT.

A signal peptide spans 1 to 22; the sequence is MAVLNPMTLGIYLQLFFCSIVS. The interval 51 to 67 is PRAD; sequence CCLLMPPPPPLFPPPFF. The interval 89-291 is disordered; it reads PSPCMQGSLG…GERGFPGPPG (203 aa). 2 Collagen-like domains span residues 95–271 and 279–293; these read GSLG…PGPP and GLKG…PGRC. The span at 100 to 111 shows a compositional bias: pro residues; that stretch reads PGPPGPQGPPGL. The segment covering 117 to 126 has biased composition (basic and acidic residues); that stretch reads PKGEKGDLGR. Residues 129–132 form a heparan sulfate proteoglycan binding region; the sequence is RKGR. Residues 133-151 show a composition bias toward pro residues; sequence PGPPGVPGEPGPVGWPGPE. The span at 181-199 shows a compositional bias: basic and acidic residues; that stretch reads RGEKGSRGERGDLGPKGEK. The interval 234–237 is heparan sulfate proteoglycan binding; it reads KRGK. The span at 262–271 shows a compositional bias: pro residues; it reads QGPPGPPGPP.

This sequence belongs to the COLQ family. Homotrimer. Component of the asymmetric form of AChE, a disulfide-bonded oligomer composed of the collagenic subunits (Q) and a variable number of asymmetric catalytic subunits (T). The N-terminal of a collagenic subunit (Q) associates with the C-terminal of a catalytic subunit (T). Post-translationally, the triple-helical tail is stabilized by disulfide bonds at each end. As to expression, expressed in skeletal muscle, heart, brain, as well as in lung, spleen, testis, but not liver. The short isoform represents about 5% of the transcripts in the soleus muscle and about 15% in the heart ventricle.

It is found in the synapse. In terms of biological role, anchors the catalytic subunits of asymmetric AChE to the synaptic basal lamina. The polypeptide is Acetylcholinesterase collagenic tail peptide (Colq) (Rattus norvegicus (Rat)).